The primary structure comprises 257 residues: Ribonuclease HII (257 aa).

An RNase H type-2 domain is found at 71–257 (ELIAGIDEVG…EPIKSMVNFK (187 aa)). Positions 77, 78, and 169 each coordinate a divalent metal cation.

It belongs to the RNase HII family. Mn(2+) serves as cofactor. Requires Mg(2+) as cofactor.

Its subcellular location is the cytoplasm. It catalyses the reaction Endonucleolytic cleavage to 5'-phosphomonoester.. In terms of biological role, endonuclease that specifically degrades the RNA of RNA-DNA hybrids. The sequence is that of Ribonuclease HII (rnhB) from Lactococcus lactis subsp. cremoris (strain MG1363).